Reading from the N-terminus, the 236-residue chain is Rab-like protein 3 (236 aa).

Residues 1-236 (MASLDRVKVL…AGTLKSLHYD (236 aa)) form a small GTPase-like region. GTP-binding positions include 16–21 (GVGKSS), 148–150 (KLD), and 179–180 (DC).

Belongs to the small GTPase superfamily. Rab family. In terms of assembly, homodimer. Interacts with GPR89; the interaction stabilizes GPR89. Interacts with RAP1GDS1.

Its function is as follows. Required for KRAS signaling regulation and modulation of cell proliferation. Regulator of KRAS prenylation, and probably prenylation of other small GTPases. Required for lymphocyte development and function. Not required for myeloid cell development. This chain is Rab-like protein 3 (RABL3), found in Homo sapiens (Human).